The following is a 492-amino-acid chain: Trigger factor (492 aa).

The disordered stretch occupies residues 77–96 (EILSSRGEKSATQPAISMTE). The region spanning 169–254 (GDRVTMNYLG…VKEVAAAAAV (86 aa)) is the PPIase FKBP-type domain. Positions 439-492 (ELLADDGEEETETKKKAPAKKKAAAKADDAAEGEEAAPKKKAPAKKKATEADAE) are disordered.

This sequence belongs to the FKBP-type PPIase family. Tig subfamily.

The protein localises to the cytoplasm. The catalysed reaction is [protein]-peptidylproline (omega=180) = [protein]-peptidylproline (omega=0). Functionally, involved in protein export. Acts as a chaperone by maintaining the newly synthesized protein in an open conformation. Functions as a peptidyl-prolyl cis-trans isomerase. This Agrobacterium fabrum (strain C58 / ATCC 33970) (Agrobacterium tumefaciens (strain C58)) protein is Trigger factor.